We begin with the raw amino-acid sequence, 234 residues long: Isoprenyl transferase (234 aa).

The active site involves D13. D13 lines the Mg(2+) pocket. Residues 14 to 17 (GNGR), W18, R26, H30, and 58 to 60 (STE) contribute to the substrate site. The active-site Proton acceptor is N61. Substrate is bound by residues W62, R64, R180, and 186-188 (RLS). E199 contributes to the Mg(2+) binding site.

Belongs to the UPP synthase family. Homodimer. Mg(2+) serves as cofactor.

Its function is as follows. Catalyzes the condensation of isopentenyl diphosphate (IPP) with allylic pyrophosphates generating different type of terpenoids. In Helicobacter pylori (strain J99 / ATCC 700824) (Campylobacter pylori J99), this protein is Isoprenyl transferase.